Consider the following 403-residue polypeptide: Ribose-phosphate pyrophosphokinase 1, chloroplastic (403 aa).

Residues M1–K49 constitute a chloroplast transit peptide. Mg(2+)-binding residues include D217, H219, D228, and D232. Residues G303–T318 are binding of phosphoribosylpyrophosphate.

This sequence belongs to the ribose-phosphate pyrophosphokinase family. The cofactor is Mg(2+).

The protein resides in the plastid. Its subcellular location is the chloroplast. The enzyme catalyses D-ribose 5-phosphate + ATP = 5-phospho-alpha-D-ribose 1-diphosphate + AMP + H(+). The chain is Ribose-phosphate pyrophosphokinase 1, chloroplastic (PRS1) from Arabidopsis thaliana (Mouse-ear cress).